Here is a 235-residue protein sequence, read N- to C-terminus: NAD(P)H-hydrate epimerase (235 aa).

The YjeF N-terminal domain occupies 18–221 (AAKIDEQLFS…GLVEEHGLQM (204 aa)). 65–69 (NNGGD) provides a ligand contact to (6S)-NADPHX. Positions 66 and 127 each coordinate K(+). (6S)-NADPHX is bound by residues 131 to 137 (GFSFKPP) and D160. S163 is a binding site for K(+).

This sequence belongs to the NnrE/AIBP family. K(+) serves as cofactor.

It carries out the reaction (6R)-NADHX = (6S)-NADHX. It catalyses the reaction (6R)-NADPHX = (6S)-NADPHX. Functionally, catalyzes the epimerization of the S- and R-forms of NAD(P)HX, a damaged form of NAD(P)H that is a result of enzymatic or heat-dependent hydration. This is a prerequisite for the S-specific NAD(P)H-hydrate dehydratase to allow the repair of both epimers of NAD(P)HX. This chain is NAD(P)H-hydrate epimerase, found in Caenorhabditis briggsae.